Consider the following 509-residue polypeptide: ATP synthase subunit alpha (509 aa).

169-176 (GDRQTGKT) serves as a coordination point for ATP.

This sequence belongs to the ATPase alpha/beta chains family. As to quaternary structure, F-type ATPases have 2 components, CF(1) - the catalytic core - and CF(0) - the membrane proton channel. CF(1) has five subunits: alpha(3), beta(3), gamma(1), delta(1), epsilon(1). CF(0) has three main subunits: a(1), b(2) and c(9-12). The alpha and beta chains form an alternating ring which encloses part of the gamma chain. CF(1) is attached to CF(0) by a central stalk formed by the gamma and epsilon chains, while a peripheral stalk is formed by the delta and b chains.

It is found in the cell inner membrane. The catalysed reaction is ATP + H2O + 4 H(+)(in) = ADP + phosphate + 5 H(+)(out). In terms of biological role, produces ATP from ADP in the presence of a proton gradient across the membrane. The alpha chain is a regulatory subunit. This is ATP synthase subunit alpha from Rhizobium leguminosarum bv. trifolii (strain WSM2304).